We begin with the raw amino-acid sequence, 226 residues long: Large ribosomal subunit protein uL1 (226 aa).

Belongs to the universal ribosomal protein uL1 family. Part of the 50S ribosomal subunit.

Binds directly to 23S rRNA. The L1 stalk is quite mobile in the ribosome, and is involved in E site tRNA release. Its function is as follows. Protein L1 is also a translational repressor protein, it controls the translation of the L11 operon by binding to its mRNA. The chain is Large ribosomal subunit protein uL1 from Borreliella burgdorferi (strain ATCC 35210 / DSM 4680 / CIP 102532 / B31) (Borrelia burgdorferi).